A 444-amino-acid chain; its full sequence is ATP-dependent protease ATPase subunit HslU (444 aa).

ATP-binding positions include Ile-20 and 62–67 (GVGKTE). The interval 137–162 (LVPPSRGTSGEPERGEDSNARQTFRK) is disordered. Positions 257, 322, and 394 each coordinate ATP.

Belongs to the ClpX chaperone family. HslU subfamily. A double ring-shaped homohexamer of HslV is capped on each side by a ring-shaped HslU homohexamer. The assembly of the HslU/HslV complex is dependent on binding of ATP.

It localises to the cytoplasm. ATPase subunit of a proteasome-like degradation complex; this subunit has chaperone activity. The binding of ATP and its subsequent hydrolysis by HslU are essential for unfolding of protein substrates subsequently hydrolyzed by HslV. HslU recognizes the N-terminal part of its protein substrates and unfolds these before they are guided to HslV for hydrolysis. This chain is ATP-dependent protease ATPase subunit HslU, found in Bordetella petrii (strain ATCC BAA-461 / DSM 12804 / CCUG 43448).